A 207-amino-acid polypeptide reads, in one-letter code: Glutathione S-transferase P (207 aa).

One can recognise a GST N-terminal domain in the interval 1–78; sequence PPYTITYFPV…HLGRSFGLYG (78 aa). Position 3 is a phosphotyrosine; by EGFR (Tyr-3). Residues Tyr-7, Arg-13, Trp-38, Lys-42, and 49–50 contribute to the glutathione site; that span reads QL. The residue at position 59 (Thr-59) is a Phosphothreonine. Glutathione is bound at residue 62-63; it reads QS. The 122-residue stretch at 80-201 folds into the GST C-terminal domain; the sequence is DQKEAALVDM…ASPEHVNRPI (122 aa). An N6-succinyllysine mark is found at Lys-100 and Lys-113. Lys-125 is subject to N6-acetyllysine.

This sequence belongs to the GST superfamily. Pi family. Homodimer. Interacts with CDK5.

The protein localises to the cytoplasm. The protein resides in the mitochondrion. It is found in the nucleus. It carries out the reaction RX + glutathione = an S-substituted glutathione + a halide anion + H(+). It catalyses the reaction prostaglandin J2 + glutathione = prostaglandin J2-S-(R)-glutathione. The enzyme catalyses prostaglandin J2 + glutathione = prostaglandin J2-S-(S)-glutathione. The catalysed reaction is prostaglandin A2 + glutathione = prostaglandin A2-S-(S)-glutathione. It carries out the reaction 11(S)-hydroxy-14(S),15(S)-epoxy-(5Z,8Z,12E)-eicosatrienoate + glutathione = (11S,15S)-dihydroxy-14(R)-S-glutathionyl-(5Z,8Z,12E)-eicosatrienoate. Functionally, conjugation of reduced glutathione to a wide number of exogenous and endogenous hydrophobic electrophiles. Involved in the formation of glutathione conjugates of both prostaglandin A2 (PGA2) and prostaglandin J2 (PGJ2). Participates in the formation of novel hepoxilin regioisomers. Negatively regulates CDK5 activity via p25/p35 translocation to prevent neurodegeneration. The sequence is that of Glutathione S-transferase P (GSTP1) from Sus scrofa (Pig).